A 38-amino-acid polypeptide reads, in one-letter code: Large ribosomal subunit protein bL36 (38 aa).

The protein belongs to the bacterial ribosomal protein bL36 family.

The protein is Large ribosomal subunit protein bL36 of Azotobacter vinelandii (strain DJ / ATCC BAA-1303).